Consider the following 456-residue polypeptide: Amino acid transporter AVT6B (456 aa).

The next 11 membrane-spanning stretches (helical) occupy residues 37 to 57 (FSGA…MALP), 58 to 78 (ATMK…MAFL), 118 to 138 (ILVS…DVLA), 164 to 184 (TFVL…FKRI), 191 to 211 (SAIS…ITII), 236 to 256 (LFTV…VHSI), 273 to 293 (ALAM…LLFG), 328 to 348 (LMLV…GLIF), 365 to 385 (SITA…PSIW), 388 to 408 (FQFT…AAVI), and 423 to 443 (IAIC…YSDA).

The protein belongs to the amino acid/polyamine transporter 2 family. Amino acid/auxin permease (AAAP) (TC 2.A.18.6) subfamily.

It is found in the membrane. The protein is Amino acid transporter AVT6B of Arabidopsis thaliana (Mouse-ear cress).